Reading from the N-terminus, the 321-residue chain is Glucokinase (321 aa).

ATP is bound at residue Gly-8–Thr-13.

This sequence belongs to the bacterial glucokinase family.

It localises to the cytoplasm. It carries out the reaction D-glucose + ATP = D-glucose 6-phosphate + ADP + H(+). In Klebsiella pneumoniae (strain 342), this protein is Glucokinase.